A 422-amino-acid chain; its full sequence is Putative polyketide beta-ketoacyl synthase 1 (422 aa).

A Ketosynthase family 3 (KS3) domain is found at 2–416; it reads SRRVVVTGIG…GFQSAVVLTG (415 aa). Catalysis depends on for beta-ketoacyl synthase activity residues Cys-169, His-309, and His-346.

Belongs to the thiolase-like superfamily. Beta-ketoacyl-ACP synthases family.

Involved in developmentally regulated synthesis of a compound biosynthetically related to polyketide antibiotics which is essential for spore color in Streptomyces halstedii. The polypeptide is Putative polyketide beta-ketoacyl synthase 1 (sch1) (Streptomyces halstedii).